Here is a 510-residue protein sequence, read N- to C-terminus: MSKSPVAIIILDGFGKRAETVGNAVAQANKPNFDRYWADFPHGELKAAGLDVGLPEGQMGNSEVGHTNIGAGRIVYQSLTRIDKAIEEGEFQENKALNNAFTHTKENNSDLHLFGLLSDGGVHSHINHLVALLETAKDKGVKNVYIHAFLDGRDVAPQSSLEYLETLQKAMNDLNYGEIATVSGRFYAMDRDKRWERVEKAYKAIVSAEGEKFEDPIELVKASYANDKNDEFVVPAIITKDGKPVATVKDNDAVIFFNFRPDRAIQLSNAFTDKEWDHFDRGANHPKNIKFVTMTLYNPSVDAEVAFEPIEMKNVIGEVLSNEGLSQLRIAETEKYPHVTFFMNGGRNEEFPGENRILINSPKVETYDLQPEMSAYEVTDALVEDIKNDKHDAIILNFANPDMVGHSGMLEPTIKAIEAVDENLGRVVDLILEKGGSAIIFADHGNSETMSTPEGKPHTAHTTVPVPVIVTKKGVKLREGGRLADVAPTMLDLLGVKKPAEMTGESLIQK.

Residues D12 and S62 each coordinate Mn(2+). The Phosphoserine intermediate role is filled by S62. Substrate is bound by residues H123, 153 to 154 (RD), R185, R191, 260 to 263 (RPDR), and K335. 5 residues coordinate Mn(2+): D402, H406, D443, H444, and H461.

It belongs to the BPG-independent phosphoglycerate mutase family. Monomer. Mn(2+) is required as a cofactor.

It catalyses the reaction (2R)-2-phosphoglycerate = (2R)-3-phosphoglycerate. It functions in the pathway carbohydrate degradation; glycolysis; pyruvate from D-glyceraldehyde 3-phosphate: step 3/5. In terms of biological role, catalyzes the interconversion of 2-phosphoglycerate and 3-phosphoglycerate. This Listeria welshimeri serovar 6b (strain ATCC 35897 / DSM 20650 / CCUG 15529 / CIP 8149 / NCTC 11857 / SLCC 5334 / V8) protein is 2,3-bisphosphoglycerate-independent phosphoglycerate mutase.